The primary structure comprises 449 residues: L10-interacting MYB domain-containing protein (449 aa).

In terms of domain architecture, Myb-like spans 162–225 (SNPQTKGYWS…YTRPQLKNHW (64 aa)). The interval 297 to 324 (TYTPPSRSRKKLLHNRSESPQWRDTTPL) is disordered. The segment covering 314–324 (ESPQWRDTTPL) has biased composition (polar residues).

As to quaternary structure, interacts with RPL10A. In terms of tissue distribution, expressed in seedlings, leaves, roots, stems and flowers.

The protein resides in the nucleus. Functionally, transcriptional repressor that associates with ribosomal protein promoters. The polypeptide is L10-interacting MYB domain-containing protein (Arabidopsis thaliana (Mouse-ear cress)).